A 510-amino-acid chain; its full sequence is Bifunctional purine biosynthesis protein PurH (510 aa).

The 142-residue stretch at 1-142 (MRALISVSDK…KNFKDVLIVT (142 aa)) folds into the MGS-like domain.

This sequence belongs to the PurH family.

It catalyses the reaction (6R)-10-formyltetrahydrofolate + 5-amino-1-(5-phospho-beta-D-ribosyl)imidazole-4-carboxamide = 5-formamido-1-(5-phospho-D-ribosyl)imidazole-4-carboxamide + (6S)-5,6,7,8-tetrahydrofolate. The catalysed reaction is IMP + H2O = 5-formamido-1-(5-phospho-D-ribosyl)imidazole-4-carboxamide. It participates in purine metabolism; IMP biosynthesis via de novo pathway; 5-formamido-1-(5-phospho-D-ribosyl)imidazole-4-carboxamide from 5-amino-1-(5-phospho-D-ribosyl)imidazole-4-carboxamide (10-formyl THF route): step 1/1. The protein operates within purine metabolism; IMP biosynthesis via de novo pathway; IMP from 5-formamido-1-(5-phospho-D-ribosyl)imidazole-4-carboxamide: step 1/1. In Campylobacter curvus (strain 525.92), this protein is Bifunctional purine biosynthesis protein PurH.